Here is a 54-residue protein sequence, read N- to C-terminus: MLYYVLVFLVVALVAGALGFGGIAGASAGIAQILFFVFLALLVISLIASAIRKA.

Helical transmembrane passes span 5–25 and 29–48; these read VLVF…GIAG and GIAQ…SLIA.

This sequence belongs to the UPF0391 family.

The protein localises to the cell membrane. In Brucella abortus (strain 2308), this protein is UPF0391 membrane protein BAB1_1670.